Consider the following 141-residue polypeptide: HTH-type transcriptional repressor NsrR (141 aa).

The HTH rrf2-type domain occupies 2–129 (QLTSFTDYGL…DNYTLADMVQ (128 aa)). The segment at residues 28–51 (ISQVTEVYGVSRNHMVKIINQLSR) is a DNA-binding region (H-T-H motif). Cysteine 91, cysteine 96, and cysteine 102 together coordinate [2Fe-2S] cluster.

It depends on [2Fe-2S] cluster as a cofactor.

Nitric oxide-sensitive repressor of genes involved in protecting the cell against nitrosative stress. May require iron for activity. The sequence is that of HTH-type transcriptional repressor NsrR from Yersinia enterocolitica serotype O:8 / biotype 1B (strain NCTC 13174 / 8081).